The following is a 280-amino-acid chain: Golgi phosphoprotein 3-like B (280 aa).

The segment at 1 to 32 (MTTLIRRGRRAEEGQERRADSEDSIKDKDEED) is disordered. Basic and acidic residues predominate over residues 10–32 (RAEEGQERRADSEDSIKDKDEED). A 1,2-diacyl-sn-glycero-3-phospho-(1D-myo-inositol 4-phosphate) contacts are provided by Trp-62, Arg-71, Arg-152, and Arg-155. A beta-hairpin required for oligomerization region spans residues 171–182 (EKQNFLLFDMTT).

It belongs to the GOLPH3/VPS74 family. In terms of assembly, homooligomer.

The protein localises to the golgi apparatus. It is found in the golgi stack membrane. The protein resides in the trans-Golgi network membrane. Functionally, phosphatidylinositol-4-phosphate-binding protein that may play a role in the process of vesicle budding at the Golgi and anterograde transport to the plasma membrane. The chain is Golgi phosphoprotein 3-like B (golph3l-b) from Xenopus laevis (African clawed frog).